Reading from the N-terminus, the 348-residue chain is Ribonuclease H (348 aa).

A compositionally biased stretch (polar residues) spans 54–65 (NTTSNYGSSTHA). The segment at 54-81 (NTTSNYGSSTHAGGQVSKPHTTQKRVHR) is disordered. The region spanning 184 to 346 (YNKSMNVYCD…ADFLAKKGAS (163 aa)) is the RNase H type-1 domain. 4 residues coordinate Mg(2+): D193, E235, D264, and D338.

This sequence belongs to the RNase H family. It depends on Mg(2+) as a cofactor.

It carries out the reaction Endonucleolytic cleavage to 5'-phosphomonoester.. Endonuclease that specifically degrades the RNA of RNA-DNA hybrids. This Saccharomyces cerevisiae (strain ATCC 204508 / S288c) (Baker's yeast) protein is Ribonuclease H (RNH1).